A 139-amino-acid chain; its full sequence is Transcription antitermination protein NusB (139 aa).

It belongs to the NusB family.

Its function is as follows. Involved in transcription antitermination. Required for transcription of ribosomal RNA (rRNA) genes. Binds specifically to the boxA antiterminator sequence of the ribosomal RNA (rrn) operons. The protein is Transcription antitermination protein NusB of Rubrobacter xylanophilus (strain DSM 9941 / JCM 11954 / NBRC 16129 / PRD-1).